We begin with the raw amino-acid sequence, 473 residues long: MTQPRKLHIKSFGCQMNVYDAQRMVDALAPEGFVETANADEADLVILNTCHIREKASEKVYSELGRLRVAKDEAALQGRRMNIAVAGCVAQAEGAEIIRRQPAVDVVVGPQSYHHLPQLLAEAARGGRALETEFPVDDKFGFLPPPQPDAIRARGISAFVTVQEGCDKFCTFCVVPYTRGAEVSRPVDKIVEDVRRLADNGVREITLIGQNVNAYHGDGPDGRPWPLGALLHHLAKIPGIVRLRYSTSHPRDVDQSLIDAHRDLPALMPFVHLPVQSGSDAILAAMNRKHSADDYRRLVDRFRSANPAIAFSSDFIVGFPGETDEDFAATLALVTQIGYAGAYSFKYSPRPGTPAAELQETVSAAVMDERLVRLQELIDSQQAAFNAAVIGTTVEVLFERAARNPGQIVGRTAYLQPAHVMAAPDIIGQVLPVRIDSLERYSLIGELAAPQQHSGFATRSEDSPQSLPITTGA.

One can recognise an MTTase N-terminal domain in the interval 5 to 125; that stretch reads RKLHIKSFGC…LPQLLAEAAR (121 aa). [4Fe-4S] cluster contacts are provided by C14, C50, C88, C166, C170, and C173. The region spanning 152 to 384 is the Radical SAM core domain; the sequence is RARGISAFVT…QELIDSQQAA (233 aa). The TRAM domain occupies 387-449; that stretch reads AAVIGTTVEV…RYSLIGELAA (63 aa). A disordered region spans residues 452 to 473; the sequence is QHSGFATRSEDSPQSLPITTGA.

This sequence belongs to the methylthiotransferase family. MiaB subfamily. In terms of assembly, monomer. [4Fe-4S] cluster is required as a cofactor.

Its subcellular location is the cytoplasm. It catalyses the reaction N(6)-dimethylallyladenosine(37) in tRNA + (sulfur carrier)-SH + AH2 + 2 S-adenosyl-L-methionine = 2-methylsulfanyl-N(6)-dimethylallyladenosine(37) in tRNA + (sulfur carrier)-H + 5'-deoxyadenosine + L-methionine + A + S-adenosyl-L-homocysteine + 2 H(+). Catalyzes the methylthiolation of N6-(dimethylallyl)adenosine (i(6)A), leading to the formation of 2-methylthio-N6-(dimethylallyl)adenosine (ms(2)i(6)A) at position 37 in tRNAs that read codons beginning with uridine. This Rhodopseudomonas palustris (strain BisB18) protein is tRNA-2-methylthio-N(6)-dimethylallyladenosine synthase.